A 139-amino-acid chain; its full sequence is mRNA stability protein mug134 (139 aa).

Residues 83 to 139 (IGKEIPSPDTIPHRVVSAGSPNKEPSLHTKRPSESSPSGASSRRESVTRHDLESNEN) are disordered. The span at 124 to 139 (SRRESVTRHDLESNEN) shows a compositional bias: basic and acidic residues.

The protein belongs to the endosulfine family.

It localises to the nucleus. The protein localises to the cytoplasm. Plays an essential role in initiation of the G0 program by preventing the degradation of specific nutrient-regulated mRNAs via the 5'-3' mRNA decay pathway. The chain is mRNA stability protein mug134 (mug134) from Schizosaccharomyces pombe (strain 972 / ATCC 24843) (Fission yeast).